Reading from the N-terminus, the 1832-residue chain is Multifunctional protein pyr-3 (1832 aa).

The GATase (Glutamine amidotransferase) stretch occupies residues 2–400 (AATVYRPATA…PGPRDTEFLF (399 aa)). Residues serine 64, glycine 273, and glycine 275 each coordinate L-glutamine. The Glutamine amidotransferase type-1 domain maps to 228–413 (RILCLDVGMK…IQTVAKCTTD (186 aa)). Cysteine 302 acts as the Nucleophile; for GATase activity in catalysis. Residues leucine 303, glutamine 306, asparagine 344, glycine 346, and tyrosine 347 each coordinate L-glutamine. Residues histidine 386 and glutamate 388 each act as for GATase activity in the active site. A linker region spans residues 401–442 (DVFIQTVAKCTTDNTLLQKGVEFPGGTTEENERLHPRVDVKK). A CPSase A region spans residues 443-983 (VLVLGSGGLS…SEHDVSFEDR (541 aa)). The interval 443-1484 (VLVLGSGGLS…TNVKNAKILV (1042 aa)) is CPSase (Carbamoyl phosphate synthase). The ATP site is built by arginine 560, arginine 600, glycine 606, glycine 607, arginine 637, methionine 639, glutamate 644, glycine 670, isoleucine 671, histidine 672, glutamine 713, and glutamate 727. ATP-grasp domains are found at residues 564–756 (ARSM…KLGL) and 1102–1293 (SRML…KAIM). Mg(2+) contacts are provided by glutamine 713, glutamate 727, and asparagine 729. Residues glutamine 713, glutamate 727, and asparagine 729 each coordinate Mn(2+). Residues 984-1484 (GVMVLGSGVY…TNVKNAKILV (501 aa)) form a CPSase B region. Arginine 1138, lysine 1177, isoleucine 1179, glutamate 1184, glycine 1209, valine 1210, histidine 1211, serine 1212, glutamine 1252, and glutamate 1264 together coordinate ATP. Residues glutamine 1252, glutamate 1264, and asparagine 1266 each coordinate Mg(2+). Residues glutamine 1252, glutamate 1264, and asparagine 1266 each contribute to the Mn(2+) site. An MGS-like domain is found at 1359–1507 (FKVPKKNILL…RDYQTSHTPL (149 aa)). The segment at 1485–1528 (EAIARYRDMEIGERDYQTSHTPLQLSGQVNFTLQDSLSRPHSFK) is linker. Residues 1529–1832 (KAHVLSVEQY…MALLALVMSG (304 aa)) form an ATCase (Aspartate transcarbamylase) region. Carbamoyl phosphate contacts are provided by arginine 1581 and threonine 1582. Position 1609 (lysine 1609) interacts with L-aspartate. Carbamoyl phosphate is bound by residues arginine 1630, histidine 1658, and glutamine 1661. 2 residues coordinate L-aspartate: arginine 1691 and arginine 1754. Carbamoyl phosphate contacts are provided by leucine 1793 and proline 1794.

This sequence in the N-terminal section; belongs to the CarA family. The protein in the central section; belongs to the CarB family. In the C-terminal section; belongs to the aspartate/ornithine carbamoyltransferase superfamily. ATCase family. The cofactor is Mg(2+). Mn(2+) is required as a cofactor.

Its subcellular location is the cytoplasm. The protein resides in the nucleus. It catalyses the reaction hydrogencarbonate + L-glutamine + 2 ATP + H2O = carbamoyl phosphate + L-glutamate + 2 ADP + phosphate + 2 H(+). The catalysed reaction is L-glutamine + H2O = L-glutamate + NH4(+). The enzyme catalyses hydrogencarbonate + NH4(+) + 2 ATP = carbamoyl phosphate + 2 ADP + phosphate + 2 H(+). It carries out the reaction carbamoyl phosphate + L-aspartate = N-carbamoyl-L-aspartate + phosphate + H(+). It participates in pyrimidine metabolism; UMP biosynthesis via de novo pathway; (S)-dihydroorotate from bicarbonate: step 1/3. The protein operates within pyrimidine metabolism; UMP biosynthesis via de novo pathway; (S)-dihydroorotate from bicarbonate: step 2/3. Its activity is regulated as follows. Both CPSase and ATCase activities are feedback inhibited by the end product UTP. In terms of biological role, multifunctional protein that encodes the first 2 enzymatic activities of the de novo pyrimidine pathway: carbamoylphosphate synthetase (CPSase; EC 6.3.5.5) and aspartate transcarbamylase (ATCase; EC 2.1.3.2). The CPSase-function is accomplished in 2 steps, by a glutamine-dependent amidotransferase activity (GATase) that binds and cleaves glutamine to produce ammonia, followed by an ammonium-dependent carbamoyl phosphate synthetase, which reacts with the ammonia, hydrogencarbonate and ATP to form carbamoyl phosphate. The endogenously produced carbamoyl phosphate is sequestered and channeled to the ATCase active site. ATCase then catalyzes the formation of carbamoyl-L-aspartate from L-aspartate and carbamoyl phosphate. The chain is Multifunctional protein pyr-3 (pyr-3) from Neurospora crassa (strain ATCC 24698 / 74-OR23-1A / CBS 708.71 / DSM 1257 / FGSC 987).